The sequence spans 240 residues: Ribonuclease P protein component 3 (240 aa).

It belongs to the eukaryotic/archaeal RNase P protein component 3 family. In terms of assembly, consists of a catalytic RNA component and at least 4-5 protein subunits.

The protein localises to the cytoplasm. The enzyme catalyses Endonucleolytic cleavage of RNA, removing 5'-extranucleotides from tRNA precursor.. Part of ribonuclease P, a protein complex that generates mature tRNA molecules by cleaving their 5'-ends. This Halorubrum lacusprofundi (strain ATCC 49239 / DSM 5036 / JCM 8891 / ACAM 34) protein is Ribonuclease P protein component 3.